A 386-amino-acid chain; its full sequence is Lipoyl synthase, mitochondrial (386 aa).

Residues Met-1–Pro-48 form a disordered region. Residues Arg-13–Asp-34 are compositionally biased toward polar residues. Pro residues predominate over residues Val-37–Ala-46. The [4Fe-4S] cluster site is built by Cys-113, Cys-118, Cys-124, Cys-144, Cys-148, Cys-151, and Ser-360. Positions Glu-129 to Arg-349 constitute a Radical SAM core domain.

It belongs to the radical SAM superfamily. Lipoyl synthase family. It depends on [4Fe-4S] cluster as a cofactor.

The protein resides in the mitochondrion. It carries out the reaction [[Fe-S] cluster scaffold protein carrying a second [4Fe-4S](2+) cluster] + N(6)-octanoyl-L-lysyl-[protein] + 2 oxidized [2Fe-2S]-[ferredoxin] + 2 S-adenosyl-L-methionine + 4 H(+) = [[Fe-S] cluster scaffold protein] + N(6)-[(R)-dihydrolipoyl]-L-lysyl-[protein] + 4 Fe(3+) + 2 hydrogen sulfide + 2 5'-deoxyadenosine + 2 L-methionine + 2 reduced [2Fe-2S]-[ferredoxin]. Its pathway is protein modification; protein lipoylation via endogenous pathway; protein N(6)-(lipoyl)lysine from octanoyl-[acyl-carrier-protein]: step 2/2. Functionally, catalyzes the radical-mediated insertion of two sulfur atoms into the C-6 and C-8 positions of the octanoyl moiety bound to the lipoyl domains of lipoate-dependent enzymes, thereby converting the octanoylated domains into lipoylated derivatives. The protein is Lipoyl synthase, mitochondrial of Sorghum bicolor (Sorghum).